A 351-amino-acid polypeptide reads, in one-letter code: Sesquiterpene synthase 14 (351 aa).

Residues Asp-87, Asn-223, Ser-227, and Glu-231 each coordinate Mg(2+). A DDXXD motif motif is present at residues 87-91 (DEYTD). An NSE/DTE motif motif is present at residues 223–231 (NDIASYNKE). (2E,6E)-farnesyl diphosphate-binding residues include Arg-312 and Tyr-313.

Belongs to the terpene synthase family. Mg(2+) serves as cofactor.

The enzyme catalyses (2E,6E)-farnesyl diphosphate = pentalenene + diphosphate. Functionally, terpene cyclase that catalyzes the cyclization of farnesyl diphosphate (FPP) to pentalenene as a major product, as well as caryophyllene. In Postia placenta (strain ATCC 44394 / Madison 698-R) (Brown rot fungus), this protein is Sesquiterpene synthase 14.